Here is a 261-residue protein sequence, read N- to C-terminus: MVKGEKGPKGKKITLKVARNCIKITFDGKKRLDLSKMGITTFPKCILRLSDMDELDLSRNLIRKIPDSISKFQNLRWLDLHSNYIDKLPESIGQMTSLLYLNVSNNRLTSNGLPVELKQLKNIRAVNLGLNHLDSVPTTLGALKELHEVGLHDNLLNNIPVSISKLPKLKKLNIKRNPFPKPGESEIFIDSIRRLENLYVVEEKDLCAACLRKCQNARDNLNRIKNMATTTPRKTIFPNLISPNSMAKDSWEDWRIRLTSS.

7 LRR repeats span residues 28-49, 51-72, 74-95, 97-118, 122-144, 145-167, and 168-189; these read GKKRLDLSKMGITTFPKCILRL, DMDELDLSRNLIRKIPDSISKF, NLRWLDLHSNYIDKLPESIGQM, SLLYLNVSNNRLTSNGLPVELK, NIRAVNLGLNHLDSVPTTLGALK, ELHEVGLHDNLLNNIPVSISKLP, and KLKKLNIKRNPFPKPGESEIFI.

The protein resides in the cytoplasm. Functionally, may be involved in the regulation of spermatogenesis and sperm maturation. The protein is Leucine-rich repeat-containing protein 18 (LRRC18) of Homo sapiens (Human).